We begin with the raw amino-acid sequence, 219 residues long: Thiamine-phosphate synthase (219 aa).

Residues 48 to 52 (QFRQK) and asparagine 84 contribute to the 4-amino-2-methyl-5-(diphosphooxymethyl)pyrimidine site. Residues aspartate 85 and aspartate 104 each coordinate Mg(2+). Serine 123 contacts 4-amino-2-methyl-5-(diphosphooxymethyl)pyrimidine. 150–152 (TPS) is a binding site for 2-[(2R,5Z)-2-carboxy-4-methylthiazol-5(2H)-ylidene]ethyl phosphate. Residue lysine 153 coordinates 4-amino-2-methyl-5-(diphosphooxymethyl)pyrimidine. 2-[(2R,5Z)-2-carboxy-4-methylthiazol-5(2H)-ylidene]ethyl phosphate is bound by residues glycine 181 and 199–200 (IS).

The protein belongs to the thiamine-phosphate synthase family. The cofactor is Mg(2+).

The enzyme catalyses 2-[(2R,5Z)-2-carboxy-4-methylthiazol-5(2H)-ylidene]ethyl phosphate + 4-amino-2-methyl-5-(diphosphooxymethyl)pyrimidine + 2 H(+) = thiamine phosphate + CO2 + diphosphate. The catalysed reaction is 2-(2-carboxy-4-methylthiazol-5-yl)ethyl phosphate + 4-amino-2-methyl-5-(diphosphooxymethyl)pyrimidine + 2 H(+) = thiamine phosphate + CO2 + diphosphate. It catalyses the reaction 4-methyl-5-(2-phosphooxyethyl)-thiazole + 4-amino-2-methyl-5-(diphosphooxymethyl)pyrimidine + H(+) = thiamine phosphate + diphosphate. It functions in the pathway cofactor biosynthesis; thiamine diphosphate biosynthesis; thiamine phosphate from 4-amino-2-methyl-5-diphosphomethylpyrimidine and 4-methyl-5-(2-phosphoethyl)-thiazole: step 1/1. In terms of biological role, condenses 4-methyl-5-(beta-hydroxyethyl)thiazole monophosphate (THZ-P) and 2-methyl-4-amino-5-hydroxymethyl pyrimidine pyrophosphate (HMP-PP) to form thiamine monophosphate (TMP). This is Thiamine-phosphate synthase from Helicobacter pylori (strain ATCC 700392 / 26695) (Campylobacter pylori).